We begin with the raw amino-acid sequence, 505 residues long: 2,3-bisphosphoglycerate-independent phosphoglycerate mutase (505 aa).

2 residues coordinate Mn(2+): D12 and S62. The active-site Phosphoserine intermediate is the S62. Residues H123, 153-154 (RD), R185, R191, 257-260 (RPDR), and K330 each bind substrate. Mn(2+) contacts are provided by D397, H401, D438, H439, and H456.

This sequence belongs to the BPG-independent phosphoglycerate mutase family. In terms of assembly, monomer. Mn(2+) serves as cofactor.

The catalysed reaction is (2R)-2-phosphoglycerate = (2R)-3-phosphoglycerate. The protein operates within carbohydrate degradation; glycolysis; pyruvate from D-glyceraldehyde 3-phosphate: step 3/5. Catalyzes the interconversion of 2-phosphoglycerate and 3-phosphoglycerate. In Staphylococcus haemolyticus (strain JCSC1435), this protein is 2,3-bisphosphoglycerate-independent phosphoglycerate mutase.